The following is a 196-amino-acid chain: Homeobox protein XENK-2 (196 aa).

Residues 48–72 are disordered; the sequence is PSADESPDNDKELSSNPDSGKKRKR. The homeobox DNA-binding region spans 69–128; that stretch reads KRKRRVLFSKAQTYELERRFRQQRYLSAPEREHLASLIRLTPTQVKIWFQNHRYKMKRAR.

This sequence belongs to the NK-2 homeobox family. In terms of tissue distribution, forebrain and midbrain.

It is found in the nucleus. Its function is as follows. Defines dorsal-ventral domains in developing brain. May play a role in defining positional information along the anterior-posterior (a/p) axis and the dorsal-ventral (d/v) axis of the developing nervous system. May be involved in determining positional or boundary information rather than determining a given cell type. This Xenopus laevis (African clawed frog) protein is Homeobox protein XENK-2.